A 561-amino-acid chain; its full sequence is MPESKYRQQTIRAPRGTVLTAKSWLTEAPLRMLMNNLDPDVAENPHELVVYGGIGRAARNWECYDAIVDALTRLEADETLLIQSGKPVGVFKTHDNAPRVLIANSNLVPHWATWEHFNELDAKGLAMYGQMTAGSWIYIGSQGIVQGTYETFVEAGRQHYNGTLAGRWVLTAGLGGMGGAQPLAATLAGACSLTIECQQSRIDFRLRTRYVDEQAATLDDALARITRYTREGKAVSVALCANAADILPELVNRGVRPDLVTDQTSAHDPLHGYLPSGWRWEEYQKNAQSDPHGTMQAAKRSMAAHVRAMLAFSKMGVPTFDYGNNIRQMAKEMGVENAFDFPGFVPAYIRPLFCRGIGPFRWVALSGDPQDIYKTDAKVKEIVAEDKHLHHWLDMARERIHFQGLPARICWVGLEWRQKLGLAFNEMVRCGEVSAPIVIGRDHLDSGSVASPNRETEAMRDGSDAVSDWPLLNALLNTASGATWVSLHHGGGVGMGFSQHAGMVIVCDGTDEAAARIRRVLHNDPATGVMRHADAGYDLAVECSVEQGLNLPMVAATQGKG.

Residues 52–53, Gln130, 176–178, Glu196, Arg201, 242–243, 263–267, 273–274, and Tyr322 contribute to the NAD(+) site; these read GG, GMG, NA, QTSAH, and YL. Residue Cys410 is part of the active site. Gly492 is an NAD(+) binding site.

Belongs to the urocanase family. It depends on NAD(+) as a cofactor.

It localises to the cytoplasm. The catalysed reaction is 4-imidazolone-5-propanoate = trans-urocanate + H2O. It participates in amino-acid degradation; L-histidine degradation into L-glutamate; N-formimidoyl-L-glutamate from L-histidine: step 2/3. Catalyzes the conversion of urocanate to 4-imidazolone-5-propionate. The chain is Urocanate hydratase from Salmonella newport (strain SL254).